We begin with the raw amino-acid sequence, 1938 residues long: Myosin-1 (1938 aa).

Residues 33–82 (DAKTSVFVADPKESFVKATVQSREGGKVTAKTEAGATVTVKEDQVFPMNP) form the Myosin N-terminal SH3-like domain. Residues T64 and T69 each carry the phosphothreonine modification. In terms of domain architecture, Myosin motor spans 86–781 (DKIEDMAMMT…LLGLLEEMRD (696 aa)). Position 130 is an N6,N6,N6-trimethyllysine (K130). An ATP-binding site is contributed by 179–186 (GESGAGKT). Y389 bears the Phosphotyrosine mark. Residue T419 is modified to Phosphothreonine. A Phosphotyrosine modification is found at Y424. S625 is subject to Phosphoserine. An actin-binding region spans residues 658-680 (LNKLMTNLRSTHPHFVRCIIPNE). H756 bears the Pros-methylhistidine mark. The interval 760-774 (KFGHTKVFFKAGLLG) is actin-binding. In terms of domain architecture, IQ spans 784 to 813 (LAQLITRTQARCRGFLARVEYQKMVERRES). The stretch at 842–1938 (LLKSAETEKE…EVHTKIISEE (1097 aa)) forms a coiled coil. Phosphoserine occurs at positions 1091 and 1095. Disordered regions lie at residues 1124–1146 (EIEA…SREL) and 1152–1171 (RLEE…KKRE). Over residues 1127–1146 (AERASRAKAEKQRSDLSREL) the composition is skewed to basic and acidic residues. 2 positions are modified to phosphoserine: S1161 and S1236. Position 1240 is a phosphothreonine (T1240). S1242 and S1260 each carry phosphoserine. A phosphothreonine mark is found at T1264 and T1285. S1287, S1291, S1302, and S1305 each carry phosphoserine. A Phosphotyrosine modification is found at Y1463. Residue T1466 is modified to Phosphothreonine. A Phosphoserine modification is found at S1473. At Y1491 the chain carries Phosphotyrosine. The residue at position 1494 (S1494) is a Phosphoserine. Position 1500 is a phosphothreonine (T1500). S1513 bears the Phosphoserine mark. At T1516 the chain carries Phosphothreonine. Phosphoserine is present on residues S1541, S1553, S1573, S1599, S1602, S1713, and S1725. 2 positions are modified to phosphothreonine: T1729 and T1735.

Belongs to the TRAFAC class myosin-kinesin ATPase superfamily. Myosin family. Muscle myosin is a hexameric protein that consists of 2 heavy chain subunits (MHC), 2 alkali light chain subunits (MLC) and 2 regulatory light chain subunits (MLC-2). Interacts with SLC26A5.

It is found in the cytoplasm. The protein localises to the myofibril. Functionally, required for normal hearing. It plays a role in cochlear amplification of auditory stimuli, likely through the positive regulation of prestin (SLC26A5) activity and outer hair cell (OHC) electromotility. In Bos taurus (Bovine), this protein is Myosin-1 (MYH1).